The sequence spans 332 residues: Glycerol-3-phosphate dehydrogenase [NAD(P)+] (332 aa).

Ser-11, Phe-12, Lys-32, and Lys-106 together coordinate NADPH. Sn-glycerol 3-phosphate contacts are provided by Lys-106, Gly-137, and Ser-139. Ala-141 is an NADPH binding site. The sn-glycerol 3-phosphate site is built by Lys-192, Asp-245, Ser-255, Arg-256, and Asn-257. Residue Lys-192 is the Proton acceptor of the active site. Arg-256 serves as a coordination point for NADPH. NADPH-binding residues include Val-280 and Glu-282.

This sequence belongs to the NAD-dependent glycerol-3-phosphate dehydrogenase family.

It is found in the cytoplasm. The enzyme catalyses sn-glycerol 3-phosphate + NAD(+) = dihydroxyacetone phosphate + NADH + H(+). It carries out the reaction sn-glycerol 3-phosphate + NADP(+) = dihydroxyacetone phosphate + NADPH + H(+). It participates in membrane lipid metabolism; glycerophospholipid metabolism. In terms of biological role, catalyzes the reduction of the glycolytic intermediate dihydroxyacetone phosphate (DHAP) to sn-glycerol 3-phosphate (G3P), the key precursor for phospholipid synthesis. This is Glycerol-3-phosphate dehydrogenase [NAD(P)+] from Staphylococcus aureus (strain bovine RF122 / ET3-1).